Consider the following 275-residue polypeptide: Large ribosomal subunit protein uL2 (275 aa).

The segment at 208–275 is disordered; the sequence is AGAKRWRGRR…NMIIRDRRKK (68 aa). 2 stretches are compositionally biased toward basic residues: residues 209 to 219 and 254 to 263; these read GAKRWRGRRPT and KGYKTRRNKR.

This sequence belongs to the universal ribosomal protein uL2 family. In terms of assembly, part of the 50S ribosomal subunit. Forms a bridge to the 30S subunit in the 70S ribosome.

Functionally, one of the primary rRNA binding proteins. Required for association of the 30S and 50S subunits to form the 70S ribosome, for tRNA binding and peptide bond formation. It has been suggested to have peptidyltransferase activity; this is somewhat controversial. Makes several contacts with the 16S rRNA in the 70S ribosome. This is Large ribosomal subunit protein uL2 from Coxiella burnetii (strain CbuK_Q154) (Coxiella burnetii (strain Q154)).